We begin with the raw amino-acid sequence, 237 residues long: MDSFLRLLIHGASGRMGQALLRLASEDPSFQVAAAVVGQAPDRHVSDGVPFFAAAELAAVPAFDVAIDFSLPQGFSSLLALCVARAVPLVSGTTGLDSRQHEALVMAGAQIPLVWGSNFSVGMAVLVNLVERAGDALSGWDCDIVESHHVHKQDAPSGSALTLGEAVACKGIAPRYTSLRAGDIVGDHLVQFTGLGERIELVHRATNRDVFARGALYVARRVVGRVPGCYRVRDLIM.

NAD(+) is bound by residues 11–16 (GASGRM), 92–94 (GTT), and 116–119 (GSNF). His-148 acts as the Proton donor/acceptor in catalysis. (S)-2,3,4,5-tetrahydrodipicolinate is bound at residue His-149. Lys-152 serves as the catalytic Proton donor. Residue 158–159 (GS) coordinates (S)-2,3,4,5-tetrahydrodipicolinate.

This sequence belongs to the DapB family.

It localises to the cytoplasm. The catalysed reaction is (S)-2,3,4,5-tetrahydrodipicolinate + NAD(+) + H2O = (2S,4S)-4-hydroxy-2,3,4,5-tetrahydrodipicolinate + NADH + H(+). It carries out the reaction (S)-2,3,4,5-tetrahydrodipicolinate + NADP(+) + H2O = (2S,4S)-4-hydroxy-2,3,4,5-tetrahydrodipicolinate + NADPH + H(+). It functions in the pathway amino-acid biosynthesis; L-lysine biosynthesis via DAP pathway; (S)-tetrahydrodipicolinate from L-aspartate: step 4/4. In terms of biological role, catalyzes the conversion of 4-hydroxy-tetrahydrodipicolinate (HTPA) to tetrahydrodipicolinate. In Xylella fastidiosa (strain 9a5c), this protein is 4-hydroxy-tetrahydrodipicolinate reductase.